A 347-amino-acid chain; its full sequence is uncharacterized protein (347 aa).

The N-terminal stretch at 1-26 is a signal peptide; it reads MQGRVAGSCAPLGLLLVCLHLPGLFA. A compositionally biased stretch (polar residues) spans 41–60; the sequence is GTNLPQLGQPSSTGPSNSEH. Disordered regions lie at residues 41–110 and 148–189; these read GTNL…MDSW and SGPL…AGGK. The span at 148 to 157 shows a compositional bias: low complexity; that stretch reads SGPLPGESSP.

As to quaternary structure, binds to numerous extracellular matrix proteins.

It is found in the secreted. Its subcellular location is the extracellular space. The protein localises to the extracellular matrix. This is an uncharacterized protein from Pan troglodytes (Chimpanzee).